Consider the following 644-residue polypeptide: Core protein VP4 (644 aa).

It belongs to the orbivirus VP4 family.

It localises to the virion. The VP4 protein is one of the five proteins (with VP1, VP3, VP6 and VP7) which form the inner capsid of the virus. The polypeptide is Core protein VP4 (Segment-4) (Bluetongue virus 13 (isolate USA) (BTV 13)).